Consider the following 443-residue polypeptide: C4-dicarboxylate transport protein (443 aa).

A run of 9 helical transmembrane segments spans residues Pro-17–Gly-37, Leu-57–Met-77, Leu-92–Val-112, Glu-139–Ala-159, Gly-161–Gly-181, Leu-201–Ile-221, Met-234–Val-254, Ile-320–Gly-340, and Ala-368–Ile-388.

This sequence belongs to the dicarboxylate/amino acid:cation symporter (DAACS) (TC 2.A.23) family.

The protein resides in the cell inner membrane. In terms of biological role, responsible for the transport of dicarboxylates such as succinate, fumarate, and malate from the periplasm across the membrane. This is C4-dicarboxylate transport protein from Rhizobium leguminosarum bv. trifolii (strain WSM2304).